The chain runs to 1002 residues: DNA-directed RNA polymerase 1, mitochondrial (1002 aa).

Residues 1-21 (MWRYISKQAYSRKFRNSHDSA) constitute a mitochondrion transit peptide. Catalysis depends on residues Asp-703, Lys-778, and Asp-935.

It belongs to the phage and mitochondrial RNA polymerase family. As to expression, the highest levels of expression are detected in the mature leaves. The level of expression is lowest in the cotyledons.

It localises to the mitochondrion. The enzyme catalyses RNA(n) + a ribonucleoside 5'-triphosphate = RNA(n+1) + diphosphate. Its function is as follows. DNA-dependent RNA polymerase catalyzes the transcription of DNA into RNA using the four ribonucleoside triphosphates as substrates. In Nicotiana sylvestris (Wood tobacco), this protein is DNA-directed RNA polymerase 1, mitochondrial (RPOT1).